A 354-amino-acid polypeptide reads, in one-letter code: Malate dehydrogenase 1, peroxisomal (354 aa).

Residues 6-14 form a peroxisomal targeting signal PTS2 region; that stretch reads RIARISAHL. NAD(+) is bound by residues 49–55 and aspartate 75; that span reads GAAGGIG. Substrate-binding residues include arginine 122 and arginine 128. Residues asparagine 135 and 158–160 contribute to the NAD(+) site; that span reads ISN. Substrate is bound by residues asparagine 160 and arginine 194. Histidine 218 acts as the Proton acceptor in catalysis. Methionine 269 provides a ligand contact to NAD(+).

The protein belongs to the LDH/MDH superfamily. MDH type 1 family. In terms of assembly, homodimer. In terms of tissue distribution, expressed in rosette leaves at low levels.

The protein localises to the peroxisome. The catalysed reaction is (S)-malate + NAD(+) = oxaloacetate + NADH + H(+). Functionally, catalyzes a reversible NAD-dependent dehydrogenase reaction involved in central metabolism and redox homeostasis between organelle compartments. Peroxisomal NAD-dependent malate dehydrogenase involved in fatty acid beta-oxidation. Reoxidizes NADH from the beta-oxidation and provides NAD for the conversion of fatty acyl-CoA to acetyl-CoA. Does not participate directly in the glyoxylate cycle. Required for maintenance of photosynthetic rates under photorespiratory conditions, and carbon flow during photorespiration. Supplies NADH reductant to the peroxisomal hydroxypyruvate reductase (HPR), which reduces hydroxypyruvate into glycerate in the photorespiratory cycle. The protein is Malate dehydrogenase 1, peroxisomal of Arabidopsis thaliana (Mouse-ear cress).